We begin with the raw amino-acid sequence, 140 residues long: Endoribonuclease YbeY (140 aa).

Positions 101, 105, and 111 each coordinate Zn(2+).

Belongs to the endoribonuclease YbeY family. It depends on Zn(2+) as a cofactor.

The protein resides in the cytoplasm. Functionally, single strand-specific metallo-endoribonuclease involved in late-stage 70S ribosome quality control and in maturation of the 3' terminus of the 16S rRNA. The sequence is that of Endoribonuclease YbeY from Aliarcobacter butzleri (strain RM4018) (Arcobacter butzleri).